The following is a 313-amino-acid chain: Ribosomal RNA small subunit methyltransferase H (313 aa).

Residues 34 to 36 (GGH), D54, F81, D102, and Q109 contribute to the S-adenosyl-L-methionine site. Residues 289-313 (IAGPEETDRNPRARSAKLRAAEKLG) form a disordered region.

The protein belongs to the methyltransferase superfamily. RsmH family.

The protein localises to the cytoplasm. It catalyses the reaction cytidine(1402) in 16S rRNA + S-adenosyl-L-methionine = N(4)-methylcytidine(1402) in 16S rRNA + S-adenosyl-L-homocysteine + H(+). Specifically methylates the N4 position of cytidine in position 1402 (C1402) of 16S rRNA. The protein is Ribosomal RNA small subunit methyltransferase H of Trichlorobacter lovleyi (strain ATCC BAA-1151 / DSM 17278 / SZ) (Geobacter lovleyi).